A 593-amino-acid chain; its full sequence is V-type sodium ATPase catalytic subunit A (593 aa).

232 to 239 (GPFGAGKT) provides a ligand contact to ATP.

It belongs to the ATPase alpha/beta chains family.

It catalyses the reaction 4 Na(+)(in) + ATP + H2O = 4 Na(+)(out) + ADP + phosphate + H(+). Its function is as follows. Involved in ATP-driven sodium extrusion. The sequence is that of V-type sodium ATPase catalytic subunit A (ntpA) from Enterococcus hirae (strain ATCC 9790 / DSM 20160 / JCM 8729 / LMG 6399 / NBRC 3181 / NCIMB 6459 / NCDO 1258 / NCTC 12367 / WDCM 00089 / R).